Consider the following 176-residue polypeptide: Transcriptional repressor NrdR (176 aa).

A zinc finger lies at 3-34 (CPYCGSLETQVKDSRPTDDASAIRRRRVCPDC). The region spanning 49 to 139 (LTVLKKSGRR…VYRNFREARD (91 aa)) is the ATP-cone domain. The tract at residues 147–176 (LDGAAQPEAPSKDDGGTDEPPAKTRAPTRA) is disordered.

This sequence belongs to the NrdR family. Zn(2+) serves as cofactor.

In terms of biological role, negatively regulates transcription of bacterial ribonucleotide reductase nrd genes and operons by binding to NrdR-boxes. The chain is Transcriptional repressor NrdR from Methylocella silvestris (strain DSM 15510 / CIP 108128 / LMG 27833 / NCIMB 13906 / BL2).